A 76-amino-acid polypeptide reads, in one-letter code: Large ribosomal subunit protein eL20 (76 aa).

The protein belongs to the eukaryotic ribosomal protein eL20 family. As to quaternary structure, part of the 50S ribosomal subunit. Binds 23S rRNA.

The polypeptide is Large ribosomal subunit protein eL20 (Methanococcus maripaludis (strain C5 / ATCC BAA-1333)).